The chain runs to 252 residues: Trans-aconitate 2-methyltransferase (252 aa).

This sequence belongs to the methyltransferase superfamily. Tam family.

The protein localises to the cytoplasm. The catalysed reaction is trans-aconitate + S-adenosyl-L-methionine = (E)-3-(methoxycarbonyl)pent-2-enedioate + S-adenosyl-L-homocysteine. Catalyzes the S-adenosylmethionine monomethyl esterification of trans-aconitate. The chain is Trans-aconitate 2-methyltransferase from Escherichia coli O139:H28 (strain E24377A / ETEC).